The primary structure comprises 147 residues: Hemoglobin subunit beta (147 aa).

Residues glutamate 3–histidine 147 form the Globin domain. Histidine 64 and histidine 93 together coordinate heme b.

The protein belongs to the globin family. As to quaternary structure, heterotetramer of two alpha chains and two beta chains. In terms of tissue distribution, red blood cells.

Its function is as follows. Involved in oxygen transport from gills to the various peripheral tissues. This chain is Hemoglobin subunit beta (hbb), found in Melanogrammus aeglefinus (Haddock).